The primary structure comprises 215 residues: Ras-related protein Rab-5B (215 aa).

Thr2 is modified (N-acetylthreonine). Positions 29, 30, 32, 33, 34, 35, 46, 47, 52, and 78 each coordinate GTP. Ser34 provides a ligand contact to Mg(2+). 2 consecutive short sequence motifs (switch) follow at residues 44-56 (QFHEYQESTIGAA) and 77-93 (AGQERYHSLAPMYYRGA). Residue Thr52 participates in Mg(2+) binding. Ser84 carries the phosphoserine; by LRRK2 modification. GTP-binding residues include Asn133, Lys134, Asp136, Ala164, and Lys165. The disordered stretch occupies residues 186–215 (PQNLGGAAGRSRGVDLHEQSQQNKSQCCSN). Residues 204–215 (QSQQNKSQCCSN) are compositionally biased toward low complexity. Residues Cys212 and Cys213 are each lipidated (S-geranylgeranyl cysteine).

This sequence belongs to the small GTPase superfamily. Rab family. As to quaternary structure, binds EEA1. Interacts with RIN2 and RIN3, which probably regulate its pathway, possibly by acting as GEFs. Interacts with GDI1, GDI2, CHML and CHM; phosphorylation at Ser-84 disrupts this interaction. The cofactor is Mg(2+). Phosphorylation of Ser-84 in the switch II region by LRRK2 prevents the association of RAB regulatory proteins, including CHM, CHML and RAB GDP dissociation inhibitors GDI1 and GDI2. In terms of processing, (Microbial infection) Glycosylated on arginine residues by S.typhimurium protein Ssek3.

The protein localises to the cell membrane. Its subcellular location is the early endosome membrane. The protein resides in the melanosome. It carries out the reaction GTP + H2O = GDP + phosphate + H(+). With respect to regulation, regulated by guanine nucleotide exchange factors (GEFs) which promote the exchange of bound GDP for free GTP. Regulated by GTPase activating proteins (GAPs) which increase the GTP hydrolysis activity. Inhibited by GDP dissociation inhibitors (GDIs). In terms of biological role, the small GTPases Rab are key regulators of intracellular membrane trafficking, from the formation of transport vesicles to their fusion with membranes. Rabs cycle between an inactive GDP-bound form and an active GTP-bound form that is able to recruit to membranes different sets of downstream effectors directly responsible for vesicle formation, movement, tethering and fusion. This is Ras-related protein Rab-5B from Homo sapiens (Human).